We begin with the raw amino-acid sequence, 600 residues long: NADH-quinone oxidoreductase subunit C/D (600 aa).

Residues 1-190 (MVNNMTDLTA…SPFELTKAKQ (190 aa)) are NADH dehydrogenase I subunit C. An NADH dehydrogenase I subunit D region spans residues 214–600 (DFMFLNLGPN…IDFVMSDVDR (387 aa)).

The protein in the N-terminal section; belongs to the complex I 30 kDa subunit family. This sequence in the C-terminal section; belongs to the complex I 49 kDa subunit family. NDH-1 is composed of 13 different subunits. Subunits NuoB, CD, E, F, and G constitute the peripheral sector of the complex.

It is found in the cell inner membrane. The enzyme catalyses a quinone + NADH + 5 H(+)(in) = a quinol + NAD(+) + 4 H(+)(out). Its function is as follows. NDH-1 shuttles electrons from NADH, via FMN and iron-sulfur (Fe-S) centers, to quinones in the respiratory chain. The immediate electron acceptor for the enzyme in this species is believed to be ubiquinone. Couples the redox reaction to proton translocation (for every two electrons transferred, four hydrogen ions are translocated across the cytoplasmic membrane), and thus conserves the redox energy in a proton gradient. The sequence is that of NADH-quinone oxidoreductase subunit C/D from Escherichia coli O157:H7.